The following is a 211-amino-acid chain: ATP-dependent dethiobiotin synthetase BioD (211 aa).

Gly-10 to Tyr-15 contributes to the ATP binding site. Thr-14 provides a ligand contact to Mg(2+). Residue Lys-35 is part of the active site. Ser-39 is a binding site for substrate. ATP is bound by residues Asp-44, Glu-105–Gly-108, and Asn-165–Cys-166. The Mg(2+) site is built by Asp-44 and Glu-105.

Belongs to the dethiobiotin synthetase family. As to quaternary structure, homodimer. Mg(2+) serves as cofactor.

The protein localises to the cytoplasm. It catalyses the reaction (7R,8S)-7,8-diammoniononanoate + CO2 + ATP = (4R,5S)-dethiobiotin + ADP + phosphate + 3 H(+). Its pathway is cofactor biosynthesis; biotin biosynthesis; biotin from 7,8-diaminononanoate: step 1/2. Functionally, catalyzes a mechanistically unusual reaction, the ATP-dependent insertion of CO2 between the N7 and N8 nitrogen atoms of 7,8-diaminopelargonic acid (DAPA, also called 7,8-diammoniononanoate) to form a ureido ring. This chain is ATP-dependent dethiobiotin synthetase BioD, found in Methanococcus vannielii (strain ATCC 35089 / DSM 1224 / JCM 13029 / OCM 148 / SB).